Consider the following 271-residue polypeptide: Formamidopyrimidine-DNA glycosylase (271 aa).

The Schiff-base intermediate with DNA role is filled by Pro-2. The Proton donor role is filled by Glu-3. Lys-58 acts as the Proton donor; for beta-elimination activity in catalysis. 3 residues coordinate DNA: His-92, Arg-111, and Arg-152. The segment at 237-271 (TVYGREGEPCKQCGRVLKHAMIGQRATVWCGSCQR) adopts an FPG-type zinc-finger fold. The active-site Proton donor; for delta-elimination activity is the Arg-261.

This sequence belongs to the FPG family. As to quaternary structure, monomer. Requires Zn(2+) as cofactor.

It carries out the reaction Hydrolysis of DNA containing ring-opened 7-methylguanine residues, releasing 2,6-diamino-4-hydroxy-5-(N-methyl)formamidopyrimidine.. The enzyme catalyses 2'-deoxyribonucleotide-(2'-deoxyribose 5'-phosphate)-2'-deoxyribonucleotide-DNA = a 3'-end 2'-deoxyribonucleotide-(2,3-dehydro-2,3-deoxyribose 5'-phosphate)-DNA + a 5'-end 5'-phospho-2'-deoxyribonucleoside-DNA + H(+). Functionally, involved in base excision repair of DNA damaged by oxidation or by mutagenic agents. Acts as a DNA glycosylase that recognizes and removes damaged bases. Has a preference for oxidized purines, such as 7,8-dihydro-8-oxoguanine (8-oxoG). Has AP (apurinic/apyrimidinic) lyase activity and introduces nicks in the DNA strand. Cleaves the DNA backbone by beta-delta elimination to generate a single-strand break at the site of the removed base with both 3'- and 5'-phosphates. This Xanthomonas oryzae pv. oryzae (strain MAFF 311018) protein is Formamidopyrimidine-DNA glycosylase.